We begin with the raw amino-acid sequence, 134 residues long: Translation initiation factor 2 subunit beta (134 aa).

This sequence belongs to the eIF-2-beta/eIF-5 family. Heterotrimer composed of an alpha, a beta and a gamma chain.

Functionally, eIF-2 functions in the early steps of protein synthesis by forming a ternary complex with GTP and initiator tRNA. The polypeptide is Translation initiation factor 2 subunit beta (Pyrobaculum calidifontis (strain DSM 21063 / JCM 11548 / VA1)).